The following is a 637-amino-acid chain: Chaperone protein HtpG (637 aa).

An a; substrate-binding region spans residues 1–347 (MTQSVHAETH…SNDLPLNVSR (347 aa)). Residues 348–564 (EILQDNKVTV…NHGMSTQMIK (217 aa)) are b. The c stretch occupies residues 565–637 (LMRAAGQPVP…SRINRLLLQA (73 aa)).

This sequence belongs to the heat shock protein 90 family. Homodimer.

Its subcellular location is the cytoplasm. Its function is as follows. Molecular chaperone. Has ATPase activity. This is Chaperone protein HtpG from Aeromonas salmonicida (strain A449).